Reading from the N-terminus, the 905-residue chain is Probable aromatic-L-amino-acid decarboxylase (905 aa).

The interval 250–296 (YLNPIIKTPPHNERVPKMKTNISKTRKKKGKVSDASKDSRPSETKKE) is disordered. The segment covering 280 to 296 (KVSDASKDSRPSETKKE) has biased composition (basic and acidic residues). Positions 492 and 591 each coordinate pyridoxal 5'-phosphate. At lysine 648 the chain carries N6-(pyridoxal phosphate)lysine. Residues 861–905 (HTAEYADPPGKSNKSPQVAAKGELPSAAPPSSRTPNSDISEKSDR) are disordered. Residues 889–898 (PPSSRTPNSD) are compositionally biased toward polar residues.

Belongs to the group II decarboxylase family. In terms of assembly, homodimer. Requires pyridoxal 5'-phosphate as cofactor.

The enzyme catalyses L-dopa + H(+) = dopamine + CO2. The catalysed reaction is 5-hydroxy-L-tryptophan + H(+) = serotonin + CO2. It participates in catecholamine biosynthesis; dopamine biosynthesis; dopamine from L-tyrosine: step 2/2. Functionally, catalyzes the decarboxylation of L-3,4-dihydroxyphenylalanine (DOPA) to dopamine, L-5-hydroxytryptophan to serotonin and L-tryptophan to tryptamine. The protein is Probable aromatic-L-amino-acid decarboxylase (hdl-1) of Caenorhabditis elegans.